A 238-amino-acid polypeptide reads, in one-letter code: tRNA (guanine-N(7)-)-methyltransferase (238 aa).

S-adenosyl-L-methionine-binding residues include glutamate 68, glutamate 93, aspartate 120, and aspartate 143. Aspartate 143 is an active-site residue. Substrate-binding positions include lysine 147, aspartate 179, and 216 to 219 (TKFE).

The protein belongs to the class I-like SAM-binding methyltransferase superfamily. TrmB family.

The catalysed reaction is guanosine(46) in tRNA + S-adenosyl-L-methionine = N(7)-methylguanosine(46) in tRNA + S-adenosyl-L-homocysteine. The protein operates within tRNA modification; N(7)-methylguanine-tRNA biosynthesis. Catalyzes the formation of N(7)-methylguanine at position 46 (m7G46) in tRNA. The polypeptide is tRNA (guanine-N(7)-)-methyltransferase (Shewanella oneidensis (strain ATCC 700550 / JCM 31522 / CIP 106686 / LMG 19005 / NCIMB 14063 / MR-1)).